Reading from the N-terminus, the 250-residue chain is HTH-type transcriptional regulator SarS (250 aa).

DNA-binding regions (H-T-H motif) lie at residues 53–76 (FKKIVSDLCYKQSDLVQHIKVLVK) and 177–200 (LKDLIETIHHKYPQTVRALNNLKK).

It belongs to the SarA family.

The protein resides in the cytoplasm. Transcriptional regulator that controls expression of some virulence factors in a cell density-dependent manner. The polypeptide is HTH-type transcriptional regulator SarS (sarS) (Staphylococcus aureus (strain MRSA252)).